Here is a 303-residue protein sequence, read N- to C-terminus: S-methyl-5'-thioadenosine phosphorylase 1 (303 aa).

Residues Ser14, 57-58 (RH), and 90-91 (SA) each bind phosphate. Met198 is a binding site for substrate. Ser199 is a binding site for phosphate. Position 222 to 224 (222 to 224 (DYD)) interacts with substrate.

It belongs to the PNP/MTAP phosphorylase family. MTAP subfamily. As to quaternary structure, homotrimer.

The protein resides in the cytoplasm. It localises to the nucleus. The catalysed reaction is S-methyl-5'-thioadenosine + phosphate = 5-(methylsulfanyl)-alpha-D-ribose 1-phosphate + adenine. Its pathway is amino-acid biosynthesis; L-methionine biosynthesis via salvage pathway; S-methyl-5-thio-alpha-D-ribose 1-phosphate from S-methyl-5'-thioadenosine (phosphorylase route): step 1/1. In terms of biological role, catalyzes the reversible phosphorylation of S-methyl-5'-thioadenosine (MTA) to adenine and 5-methylthioribose-1-phosphate. Involved in the breakdown of MTA, a major by-product of polyamine biosynthesis. Responsible for the first step in the methionine salvage pathway after MTA has been generated from S-adenosylmethionine. Has broad substrate specificity with 6-aminopurine nucleosides as preferred substrates. This chain is S-methyl-5'-thioadenosine phosphorylase 1, found in Puccinia graminis f. sp. tritici (strain CRL 75-36-700-3 / race SCCL) (Black stem rust fungus).